A 901-amino-acid chain; its full sequence is MAAQNEQRPERIKTTPYLEGDVLSSDSGPLLSVFALQEIMQKVRQVQADYMTATREVDFTVPDVQKILDDIKALAAEQVSKIVKMPSISFRHIVMQARDRVLRVDTYYEEMSQVGDVITEDEPEKFYSTIIKKVRFIRGKGSFILHDIPTRDHRGMEVAEPEVLGVEFKNVLPVLTAEHRAMIQNALDGSIIENGNVATRDVDVFIGACSEPVYRIYNRLQGYIEAVQLQELRNSIGWLERLGQRKRITYSQEVLTEFRRQDTIWVLALQLPVNPQVVWDVPRSSIANLIMNIATCLPTGEYIAPNPRISSITLTQRITTTGPFAILTGSTPTAQQLNDVRKIYLALMFPGQIILDLKIDPGERMDPAVRMVAGVVGHLLFTAGGRFTNLTQNMARQLDIALNDYLLYMYNTRVQVNYGPTGEPLDFQIGRNQYDCNVFRADFGSGAGYNGWATIDVEYREPAPYVHAQRYIRYCGIDSRELINPTTYGIGMTYHCYNEMLRMLVAAGKDSEAAYFRSMLPFHMVRFARINQIINEDLHSVFSLPDDMFNALLPDLIAGAHQNADPVVLDVSWISLWFAFNRSFEPTHRNEMLEVAPLIESVYASELSVMKVDMRHLSLMQRRFPDVLIQARPSHFWKAVLNDSPEAVKAVMNLSHSHNFINIRDMMRWVMLPSLQPSLKLVLEEEAWAAANDFEDLMLTDQVYMHRDMLPEPRLDDVERFRQEGFYYTNMLEAPPEIDRVVQYTYEIARLQANMGQFRAALRRIMDDDDWVRFGGVLRTVRVKFVDARPPDDVLQGLPFSYDTNEKGGLAYATIKYATETTIFYLIYNVEFSNTPDSLVLINPTYTMTKVFINKRIVERVRVRQILAVLNRRFVAYKGKMRIMDITQSLKMGTKLAAPTV.

It belongs to the orbivirus VP3 family.

It localises to the virion. Functionally, the VP3 protein is one of the five proteins (with VP1, VP4, VP6 and VP7) which form the inner capsid of the virus. The sequence is that of Core protein VP3 (Segment-3) from Antilocapra americana (Pronghorn).